Reading from the N-terminus, the 228-residue chain is Cytidylate kinase (228 aa).

17–25 (GPTASGKGT) serves as a coordination point for ATP.

This sequence belongs to the cytidylate kinase family. Type 1 subfamily.

Its subcellular location is the cytoplasm. The catalysed reaction is CMP + ATP = CDP + ADP. The enzyme catalyses dCMP + ATP = dCDP + ADP. This chain is Cytidylate kinase, found in Paraburkholderia phymatum (strain DSM 17167 / CIP 108236 / LMG 21445 / STM815) (Burkholderia phymatum).